The following is a 447-amino-acid chain: Phosphoglucosamine mutase (447 aa).

The active-site Phosphoserine intermediate is the Ser103. The Mg(2+) site is built by Ser103, Asp242, Asp244, and Asp246. At Ser103 the chain carries Phosphoserine.

Belongs to the phosphohexose mutase family. It depends on Mg(2+) as a cofactor. Post-translationally, activated by phosphorylation.

The catalysed reaction is alpha-D-glucosamine 1-phosphate = D-glucosamine 6-phosphate. Catalyzes the conversion of glucosamine-6-phosphate to glucosamine-1-phosphate. The protein is Phosphoglucosamine mutase of Jannaschia sp. (strain CCS1).